Reading from the N-terminus, the 3174-residue chain is Intermembrane lipid transfer protein VPS13A (3174 aa).

The Chorein N-terminal domain maps to 3-116 (FESVVVDVLN…LMEAKQQELK (114 aa)). TPR repeat units follow at residues 212–245 (LFAYWNVKSQMFYLSDYDNSLDDLKNGIVNENIV), 373–406 (LTSKKPPGELLVSLEELEKTLDVFNITIARQTAE), and 537–575 (IDSFHITGLPDNSEKPRLLSSLDDAMSLFQITFEINPLD). Ser839 bears the Phosphoserine mark. The short motif at 842-848 (EFFDAPC) is the FFAT element. 2 TPR repeats span residues 1256-1289 (VIDLITIKLSEMRLYRSRFINDAYQEVLDLLLPL) and 1291-1320 (LEVVVERNLCWEWYQEVPCFNVNAQLKPME). Ser1416 carries the phosphoserine modification. The TPR 6 repeat unit spans residues 2009-2041 (YEGDTLLGTASPENEFNIPLGSYRSFIFLKPED). In terms of domain architecture, SHR-BD spans 2209-2454 (VAFHSPYWMV…VFYTWADPVG (246 aa)). TPR repeat units follow at residues 2568–2601 (PMSVKHTEKLEREFKEYTESSPSEDKVIQLDTNV), 2717–2751 (LGFIYALTDLMTEAEVTENTEVELFHKDIEAFKEE), and 2860–2898 (ILGLDVLGNPFGLIREFSEGVEAFFYEPYQGAIQGPEEF). Positions 2751-3174 (EYKTASLVDQ…QEAREPSPSL (424 aa)) are required for mitochondrial localization. The required for lipid droplet localization stretch occupies residues 2953-3027 (PAGFREGITR…SSTFQGIKRA (75 aa)). A TPR 10 repeat occupies 3086 to 3119 (MLMITRRGVLFVTKGTFGQLTCEWQYSFDEFTKE).

The protein belongs to the VPS13 family. In terms of assembly, interacts (via FFAT motif) with VAPA and VAPB. Interacts with RAB7A. Interacts with XK. Expressed in red blood cells (at protein level). Widely expressed, with high expression in brain, heart, skeletal muscle and kidney.

Its subcellular location is the mitochondrion outer membrane. It is found in the endoplasmic reticulum membrane. The protein localises to the endosome membrane. It localises to the lysosome membrane. The protein resides in the lipid droplet. Its subcellular location is the golgi apparatus. It is found in the cytoplasmic vesicle. The protein localises to the secretory vesicle. It localises to the neuronal dense core vesicle. In terms of biological role, mediates the transfer of lipids between membranes at organelle contact sites. Binds phospholipids. Required for the formation or stabilization of ER-mitochondria contact sites which enable transfer of lipids between the ER and mitochondria. Negatively regulates lipid droplet size and motility. Required for efficient lysosomal protein degradation. This chain is Intermembrane lipid transfer protein VPS13A (VPS13A), found in Homo sapiens (Human).